A 635-amino-acid chain; its full sequence is Ligand-gated ion channel 4 (635 aa).

Residues 1-24 (MIICYSCLTVSILLTIKFVPCRFA) form the signal peptide. Over 25–324 (GIEHQNTKSR…IHMHRRPLFY (300 aa)) the chain is Extracellular. Residues Asn-46, Asn-139, Asn-177, and Asn-225 are each glycosylated (N-linked (GlcNAc...) asparagine). The cysteines at positions 238 and 252 are disulfide-linked. A glycan (N-linked (GlcNAc...) asparagine) is linked at Asn-282. Transmembrane regions (helical) follow at residues 325–345 (VFNH…GFLM), 355–375 (MIIT…ESIP), and 381–401 (VPLI…ATCV). Residues 402–599 (NVITLNMHRN…QQLASVVDRL (198 aa)) are Cytoplasmic-facing. The helical transmembrane segment at 600–620 (LLCLFCTATLFTIICLLIVPV) threads the bilayer. The N-linked (GlcNAc...) asparagine glycan is linked to Asn-625.

This sequence belongs to the ligand-gated ion channel (TC 1.A.9) family.

It is found in the postsynaptic cell membrane. The protein resides in the cell membrane. Possible acetylcholine receptor. The sequence is that of Ligand-gated ion channel 4 (lgc-4) from Caenorhabditis elegans.